Consider the following 131-residue polypeptide: Small ribosomal subunit protein uS8 (131 aa).

The protein belongs to the universal ribosomal protein uS8 family. As to quaternary structure, part of the 30S ribosomal subunit. Contacts proteins S5 and S12.

Its function is as follows. One of the primary rRNA binding proteins, it binds directly to 16S rRNA central domain where it helps coordinate assembly of the platform of the 30S subunit. The chain is Small ribosomal subunit protein uS8 from Hyphomonas neptunium (strain ATCC 15444).